The chain runs to 563 residues: (R)-mandelonitrile lyase 2 (563 aa).

The first 27 residues, 1-27 (MEKSTMSAILLVLYIFVLHLQYSEVHS), serve as a signal peptide directing secretion. FAD-binding positions include 63–64 (TS), 82–83 (ER), Val129, Thr133, and 137–140 (NAGV). Residues Asn145 and Asn162 are each glycosylated (N-linked (GlcNAc...) asparagine). Residue Val244 coordinates FAD. Cys355 serves as a coordination point for substrate. 2 N-linked (GlcNAc...) asparagine glycosylation sites follow: Asn379 and Asn419. Cys426 and Cys477 are disulfide-bonded. Tyr484 serves as a coordination point for substrate. Residues 485 to 486 (WH) and Gly514 contribute to the FAD site. His486 acts as the Proton donor in catalysis. The Proton acceptor role is filled by His524. An FAD-binding site is contributed by 525–526 (PQ).

The protein belongs to the GMC oxidoreductase family. As to quaternary structure, monomer. Requires FAD as cofactor. Glycosylated. Deglycosylation does not affect the enzymatic activity.

The enzyme catalyses (R)-mandelonitrile = benzaldehyde + hydrogen cyanide. Its function is as follows. Involved in cyanogenesis, the release of HCN from injured tissues. Catalyzes the stereospecific addition of HCN to a variety of aldehydes in vitro. Has no oxidase activity. The redox properties of the FAD cofactor appear to be unimportant for catalysis. The protein is (R)-mandelonitrile lyase 2 (MDL2) of Prunus dulcis (Almond).